Here is a 328-residue protein sequence, read N- to C-terminus: Probable fused nickel transport protein LarMN (328 aa).

Transmembrane regions (helical) follow at residues Leu8–Val28, Leu42–Ile62, Leu75–Leu95, Gly103–Gly123, Leu138–Glu158, Met187–Phe207, Pro229–Asn249, and Pro296–Ile316.

The protein belongs to the CbiM family. NikM subfamily. May form an energy-coupling factor (ECF) transporter complex composed of an ATP-binding protein (A component, LarO), a transmembrane protein (T component, LarQ) and a fused possible substrate-capture protein (S component, LarMN) of unknown stoichiometry.

Its subcellular location is the cell membrane. Functionally, probably part of the energy-coupling factor (ECF) transporter complex LarMNQO involved in nickel import. The protein is Probable fused nickel transport protein LarMN of Lactiplantibacillus plantarum (strain ATCC BAA-793 / NCIMB 8826 / WCFS1) (Lactobacillus plantarum).